A 191-amino-acid polypeptide reads, in one-letter code: Probable protein-S-isoprenylcysteine O-methyltransferase (191 aa).

The next 3 helical transmembrane spans lie at 8-28 (WLFA…AAAF), 45-65 (YVLA…LFPE), and 66-86 (LKEY…GEVI). Residues 110 to 113 (HKLI), Tyr-118, and 123 to 126 (HPGY) each bind S-adenosyl-L-methionine. A helical membrane pass occupies residues 129–149 (FLIWAVGTQVMLCNPLSTVAF). Arg-160 is a substrate binding site. Residue Glu-164 coordinates S-adenosyl-L-methionine.

The protein belongs to the class VI-like SAM-binding methyltransferase superfamily. Isoprenylcysteine carboxyl methyltransferase family. Requires Zn(2+) as cofactor.

It localises to the endoplasmic reticulum membrane. It catalyses the reaction [protein]-C-terminal S-[(2E,6E)-farnesyl]-L-cysteine + S-adenosyl-L-methionine = [protein]-C-terminal S-[(2E,6E)-farnesyl]-L-cysteine methyl ester + S-adenosyl-L-homocysteine. Its function is as follows. Catalyzes the post-translational methylation of isoprenylated C-terminal cysteine residues. Carboxyl methylation is a reversible and potentially regulated step in the post-translational modification of prenylated proteins. This Oryza sativa subsp. indica (Rice) protein is Probable protein-S-isoprenylcysteine O-methyltransferase (ICMT).